The chain runs to 754 residues: Probable beta-glucosidase D (754 aa).

A signal peptide spans 1–20 (MKVLSFIVAAALLGLTGASS). N-linked (GlcNAc...) asparagine glycosylation is found at asparagine 66, asparagine 69, and asparagine 186. The tract at residues 186-206 (NRTGGGGGGGGDSGSAPYSSN) is disordered. Positions 188–198 (TGGGGGGGGDS) are enriched in gly residues. A glycan (N-linked (GlcNAc...) asparagine) is linked at asparagine 239. The active site involves aspartate 267. Residues asparagine 301, asparagine 345, asparagine 443, asparagine 512, asparagine 534, asparagine 573, asparagine 588, asparagine 655, and asparagine 745 are each glycosylated (N-linked (GlcNAc...) asparagine).

The protein belongs to the glycosyl hydrolase 3 family.

Its subcellular location is the secreted. The enzyme catalyses Hydrolysis of terminal, non-reducing beta-D-glucosyl residues with release of beta-D-glucose.. It participates in glycan metabolism; cellulose degradation. In terms of biological role, beta-glucosidases are one of a number of cellulolytic enzymes involved in the degradation of cellulosic biomass. Catalyzes the last step releasing glucose from the inhibitory cellobiose. The chain is Probable beta-glucosidase D (bglD) from Aspergillus niger (strain ATCC MYA-4892 / CBS 513.88 / FGSC A1513).